We begin with the raw amino-acid sequence, 227 residues long: MAYPFQLGLQDATSPIMEELLHFHDHTLMIVFLISSLVLYIISLMLTTKLTHTSTMDAQEVETVWTILPAIILILIALLSLRILYMMDEINNPFLTMKTMGHQWYWSYEYTDYEDLNFDSYMIPTQELKPGELRLLEVDNRVILPMEMTVRMLISSEDVLHSWAVPSLGLKTDAIPGRLNQTTLMAMRPGLYYGQCSEICGSNHSFMPIVLEMVPLSYFETWSALMV.

Topologically, residues Met1–Ser14 are mitochondrial intermembrane. Residues Pro15 to Met45 form a helical membrane-spanning segment. At Leu46–Gln59 the chain is on the mitochondrial matrix side. The helical transmembrane segment at Glu60 to Met87 threads the bilayer. Topologically, residues Asp88–Val227 are mitochondrial intermembrane. Positions 161, 196, 198, 200, 204, and 207 each coordinate Cu cation. Glu198 contacts Mg(2+). Tyr218 bears the Phosphotyrosine mark.

It belongs to the cytochrome c oxidase subunit 2 family. In terms of assembly, component of the cytochrome c oxidase (complex IV, CIV), a multisubunit enzyme composed of 14 subunits. The complex is composed of a catalytic core of 3 subunits MT-CO1, MT-CO2 and MT-CO3, encoded in the mitochondrial DNA, and 11 supernumerary subunits COX4I, COX5A, COX5B, COX6A, COX6B, COX6C, COX7A, COX7B, COX7C, COX8 and NDUFA4, which are encoded in the nuclear genome. The complex exists as a monomer or a dimer and forms supercomplexes (SCs) in the inner mitochondrial membrane with NADH-ubiquinone oxidoreductase (complex I, CI) and ubiquinol-cytochrome c oxidoreductase (cytochrome b-c1 complex, complex III, CIII), resulting in different assemblies (supercomplex SCI(1)III(2)IV(1) and megacomplex MCI(2)III(2)IV(2)). Found in a complex with TMEM177, COA6, COX18, COX20, SCO1 and SCO2. Interacts with TMEM177 in a COX20-dependent manner. Interacts with COX20. Interacts with COX16. It depends on Cu cation as a cofactor.

The protein resides in the mitochondrion inner membrane. It carries out the reaction 4 Fe(II)-[cytochrome c] + O2 + 8 H(+)(in) = 4 Fe(III)-[cytochrome c] + 2 H2O + 4 H(+)(out). In terms of biological role, component of the cytochrome c oxidase, the last enzyme in the mitochondrial electron transport chain which drives oxidative phosphorylation. The respiratory chain contains 3 multisubunit complexes succinate dehydrogenase (complex II, CII), ubiquinol-cytochrome c oxidoreductase (cytochrome b-c1 complex, complex III, CIII) and cytochrome c oxidase (complex IV, CIV), that cooperate to transfer electrons derived from NADH and succinate to molecular oxygen, creating an electrochemical gradient over the inner membrane that drives transmembrane transport and the ATP synthase. Cytochrome c oxidase is the component of the respiratory chain that catalyzes the reduction of oxygen to water. Electrons originating from reduced cytochrome c in the intermembrane space (IMS) are transferred via the dinuclear copper A center (CU(A)) of subunit 2 and heme A of subunit 1 to the active site in subunit 1, a binuclear center (BNC) formed by heme A3 and copper B (CU(B)). The BNC reduces molecular oxygen to 2 water molecules using 4 electrons from cytochrome c in the IMS and 4 protons from the mitochondrial matrix. The chain is Cytochrome c oxidase subunit 2 (MT-CO2) from Nyctereutes procyonoides (Raccoon dog).